We begin with the raw amino-acid sequence, 149 residues long: D-aminoacyl-tRNA deacylase (149 aa).

Positions 137 to 138 (GP) match the Gly-cisPro motif, important for rejection of L-amino acids motif.

It belongs to the DTD family. Homodimer.

It localises to the cytoplasm. The enzyme catalyses glycyl-tRNA(Ala) + H2O = tRNA(Ala) + glycine + H(+). It carries out the reaction a D-aminoacyl-tRNA + H2O = a tRNA + a D-alpha-amino acid + H(+). In terms of biological role, an aminoacyl-tRNA editing enzyme that deacylates mischarged D-aminoacyl-tRNAs. Also deacylates mischarged glycyl-tRNA(Ala), protecting cells against glycine mischarging by AlaRS. Acts via tRNA-based rather than protein-based catalysis; rejects L-amino acids rather than detecting D-amino acids in the active site. By recycling D-aminoacyl-tRNA to D-amino acids and free tRNA molecules, this enzyme counteracts the toxicity associated with the formation of D-aminoacyl-tRNA entities in vivo and helps enforce protein L-homochirality. The sequence is that of D-aminoacyl-tRNA deacylase from Anaeromyxobacter dehalogenans (strain 2CP-C).